Reading from the N-terminus, the 134-residue chain is Large ribosomal subunit protein uL18 (134 aa).

Belongs to the universal ribosomal protein uL18 family. As to quaternary structure, part of the 50S ribosomal subunit; part of the 5S rRNA/L5/L18/L25 subcomplex. Contacts the 5S and 23S rRNAs.

Its function is as follows. This is one of the proteins that bind and probably mediate the attachment of the 5S RNA into the large ribosomal subunit, where it forms part of the central protuberance. This chain is Large ribosomal subunit protein uL18, found in Corynebacterium glutamicum (strain ATCC 13032 / DSM 20300 / JCM 1318 / BCRC 11384 / CCUG 27702 / LMG 3730 / NBRC 12168 / NCIMB 10025 / NRRL B-2784 / 534).